A 400-amino-acid polypeptide reads, in one-letter code: Large envelope protein (400 aa).

N-acetylmethionine is present on M1. The N-myristoyl glycine; by host moiety is linked to residue G2. Positions 2 to 119 are pre-S1; it reads GGWSSKPRQG…PPLRDSHPQA (118 aa). The interval 2–174 is pre-S; that stretch reads GGWSSKPRQG…FSRIGDPALN (173 aa). The Virion surface; in external conformation portion of the chain corresponds to 2–181; the sequence is GGWSSKPRQG…ALNMENITSG (180 aa). The Intravirion; in internal conformation portion of the chain corresponds to 2–253; that stretch reads GGWSSKPRQG…PGYRWMCLRR (252 aa). A glycan (N-linked (GlcNAc...) asparagine) is linked at W4. Residues 85–118 are disordered; it reads LTTVPAAPPPASSNRQSGKQPTPISPPLRDSHPQ. Residues 96-106 are compositionally biased toward polar residues; sequence SSNRQSGKQPT. A pre-S2 region spans residues 120 to 174; sequence MQWNSTTFHQTLQDPRVRGLYFPAGGSSSGTVNPVPTTASPISSIFSRIGDPALN. A helical membrane pass occupies residues 182-202; that stretch reads FLGPLLVLQAGFFLLTRILTI. Topologically, residues 203 to 253 are intravirion; in external conformation; that stretch reads PQSLDSWWTSLNFLGGTTVCLGQNSQSPISNHSPTSCPPTCPGYRWMCLRR. Residues 254–274 traverse the membrane as a helical segment; sequence FIIFLFILLLCLIFLLVLLDY. Residues 275-348 lie on the Virion surface side of the membrane; that stretch reads QGMLPVCPLI…WASARFSWLS (74 aa). N320 is a glycosylation site (N-linked (GlcNAc...) asparagine; by host). The chain crosses the membrane as a helical span at residues 349–369; the sequence is LLVPFVQWFVGLSPTVWLSVI. Residues 370 to 375 are Intravirion-facing; sequence WMMWYW. Residues 376-398 form a helical membrane-spanning segment; the sequence is GPSLYSILSPFLPLLPIFFCLWV. Over 399–400 the chain is Virion surface; that stretch reads YI.

Belongs to the orthohepadnavirus major surface antigen family. In terms of assembly, in its internal form (Li-HBsAg), interacts with the capsid protein and with the isoform S. Interacts with host chaperone CANX. Associates with host chaperone CANX through its pre-S2 N glycan; this association may be essential for isoform M proper secretion. As to quaternary structure, interacts with isoform L. Interacts with the antigens of satellite virus HDV (HDVAgs); this interaction is required for encapsidation of HDV genomic RNA. Isoform M is N-terminally acetylated by host at a ratio of 90%, and N-glycosylated by host at the pre-S2 region. Post-translationally, myristoylated.

Its subcellular location is the virion membrane. Its function is as follows. The large envelope protein exists in two topological conformations, one which is termed 'external' or Le-HBsAg and the other 'internal' or Li-HBsAg. In its external conformation the protein attaches the virus to cell receptors and thereby initiating infection. This interaction determines the species specificity and liver tropism. This attachment induces virion internalization predominantly through caveolin-mediated endocytosis. The large envelope protein also assures fusion between virion membrane and endosomal membrane. In its internal conformation the protein plays a role in virion morphogenesis and mediates the contact with the nucleocapsid like a matrix protein. Functionally, the middle envelope protein plays an important role in the budding of the virion. It is involved in the induction of budding in a nucleocapsid independent way. In this process the majority of envelope proteins bud to form subviral lipoprotein particles of 22 nm of diameter that do not contain a nucleocapsid. In Homo sapiens (Human), this protein is Large envelope protein.